The following is a 532-amino-acid chain: Bifunctional purine biosynthesis protein PurH (532 aa).

Residues 1–147 (MADRPIRQAL…KNHKDVAIVV (147 aa)) enclose the MGS-like domain.

The protein belongs to the PurH family.

The catalysed reaction is (6R)-10-formyltetrahydrofolate + 5-amino-1-(5-phospho-beta-D-ribosyl)imidazole-4-carboxamide = 5-formamido-1-(5-phospho-D-ribosyl)imidazole-4-carboxamide + (6S)-5,6,7,8-tetrahydrofolate. It carries out the reaction IMP + H2O = 5-formamido-1-(5-phospho-D-ribosyl)imidazole-4-carboxamide. It functions in the pathway purine metabolism; IMP biosynthesis via de novo pathway; 5-formamido-1-(5-phospho-D-ribosyl)imidazole-4-carboxamide from 5-amino-1-(5-phospho-D-ribosyl)imidazole-4-carboxamide (10-formyl THF route): step 1/1. It participates in purine metabolism; IMP biosynthesis via de novo pathway; IMP from 5-formamido-1-(5-phospho-D-ribosyl)imidazole-4-carboxamide: step 1/1. In Haemophilus influenzae (strain ATCC 51907 / DSM 11121 / KW20 / Rd), this protein is Bifunctional purine biosynthesis protein PurH.